We begin with the raw amino-acid sequence, 773 residues long: Lon protease homolog 2, peroxisomal (773 aa).

The 190-residue stretch at 9–198 (LPVIVVDSGV…MCEKWMQMQR (190 aa)) folds into the Lon N-terminal domain. 336–343 (GPPGIGKT) lines the ATP pocket. Residues 587 to 766 (PLPPGVCFGL…EDVIEAMMEK (180 aa)) form the Lon proteolytic domain. Active-site residues include Ser-672 and Lys-715. The Microbody targeting signal motif lies at 771 to 773 (AKL).

Belongs to the peptidase S16 family.

It localises to the peroxisome matrix. It carries out the reaction Hydrolysis of proteins in presence of ATP.. Functionally, ATP-dependent serine protease that mediates the selective degradation of misfolded and unassembled polypeptides in the peroxisomal matrix. Necessary for type 2 peroxisome targeting signal (PTS2)-containing protein processing and facilitates peroxisome matrix protein import. This is Lon protease homolog 2, peroxisomal from Caenorhabditis briggsae.